Reading from the N-terminus, the 160-residue chain is Cyclic pyranopterin monophosphate synthase (160 aa).

Substrate contacts are provided by residues 77–79 and 114–115; these read MCH and ME. Aspartate 129 is a catalytic residue.

Belongs to the MoaC family. Homohexamer; trimer of dimers.

The catalysed reaction is (8S)-3',8-cyclo-7,8-dihydroguanosine 5'-triphosphate = cyclic pyranopterin phosphate + diphosphate. It functions in the pathway cofactor biosynthesis; molybdopterin biosynthesis. Its function is as follows. Catalyzes the conversion of (8S)-3',8-cyclo-7,8-dihydroguanosine 5'-triphosphate to cyclic pyranopterin monophosphate (cPMP). The protein is Cyclic pyranopterin monophosphate synthase of Listeria monocytogenes serotype 4b (strain F2365).